A 223-amino-acid polypeptide reads, in one-letter code: Cytidylate kinase (223 aa).

Residue 12–20 coordinates ATP; it reads GPAGSGKST.

The protein belongs to the cytidylate kinase family. Type 1 subfamily.

The protein resides in the cytoplasm. It carries out the reaction CMP + ATP = CDP + ADP. It catalyses the reaction dCMP + ATP = dCDP + ADP. This Onion yellows phytoplasma (strain OY-M) protein is Cytidylate kinase.